The primary structure comprises 1528 residues: MELSPLQPVNENMLMNKKKNEDGKKRLSIERIYQKKTQLEHILLRPDTYIGSVELVTQQMWVYDEDVGINYREVTFVPGLYKIFDEILVNAADNKQRDPKMSCIRVTIDPENNVISIWNNGKGIPVVEHKVEKIYVPALIFGQLLTSSNYDDDEKKVTGGRNGYGAKLCNIFSTKFTVETASREYKKMFKQTWMDNMGRAGDMELKPFSGEDYTCITFQPDLSKFKMQSLDKDIVALMVRRAYDIAGSTKDVKVFLNGNSLPVKGFRSYVDLYLKDKVDETGNSLKVIHEQVNPRWEVCLTMSERGFQQISFVNSIATSKGGRHVDYVADQIVSKLVDVVKKKNKGGVAVKAHQVKNHMWIFVNALIENPTFDSQTKENMTLQAKSFGSTCQLSEKFIKAAIGCGIVESILNWVKFKAQIQLNKKCSAVKHTKIKGIPKLDDANDAGSRNSTECTLILTEGDSAKTLAVSGLGVVGRDKYGVFPLRGKILNVREASHKQIMENAEINNIIKIVGLQYKKNYEDEDSLKTLRYGKIMIMTDQDQDGSHIKGLLINFIHHNWPSLLRHRFLEEFITPIVKVSKNKQEIAFYSLPEFEEWKSSTPNHKKWKVKYYKGLGTSTSKEAKEYFADMKRHRIQFKYSGPEDDAAISLAFSKKQVDDRKEWLTNFMEDRRQRKLLGLPEDYLYGQSTSYLTYNDFINKELILFSNSDNERSIPSMVDGLKPGQRKVLFTCFKRNDKREVKVAQLAGSVAEMSSYHHGEMSLMMTIINLAQNFVGSNNLNLLQPIGQFGTRLHGGKDSASPRYIFTMLSPLARLLFPPKDDHTLRFLYDDNQRVEPEWYIPIIPMVLINGAEGIGTGWSCKIPNFDVREVVNNIRRLLDGEEPLPMLPSYKNFKGTIEELASNQYVINGEVAILDSTTIEISELPIRTWTQTYKEQVLEPMLNGTEKTPSLITDYREYHTDTTVKFVIKMTEEKLAEAERVGLHKVFKLQSSLTCNSMVLFDHVGCLKKYDTVLDILRDFFELRLKYYGLRKEWLLGMLGAESSKLNNQARFILEKIDGKIVIENKPKKELIKVLIQRGYDSDPVKAWKEAQQKVPDEEENEESDTETSTSDSAAEAGPTFNYLLDMPLWYLTKEKKDELCKQRNEKEQELNTLKQKSPSDLWKEDLAVFIEELEVVEAKEKQDEQVGLPGKAGKAKGKKAQMCADVLPSPRGKRVIPQVTVEMKAEAEKKIRKKIKSENVEGTPAEDGAEPGSLRQRIEKKQKKEPGAKKQTTLPFKPVKKGRKKNPWSDSESDVSSNESNVDVPPRQKEQRSAAAKAKFTVDLDSDEDFSGLDEKDEDEDFLPLDATPPKAKIPPKNTKKALKTQGSSMSVVDLESDVKDSVPASPGVPAADFPAETEQSKPSKKTVGVKKTATKSQSSVSTAGTKKRAAPKGTKSDSALSARVSEKPAPAKAKNSRKRKPSSSDSSDSDFERAISKGATSKKAKGEEQDFPVDLEDTIAPRAKSDRARKPIKYLEESDDDDDLF.

Methionine 1 carries the N-acetylmethionine modification. Phosphoserine is present on serine 4. A Glycyl lysine isopeptide (Lys-Gly) (interchain with G-Cter in SUMO2) cross-link involves residue lysine 17. Residues asparagine 90, asparagine 119, and 147 to 149 (SSN) each bind ATP. Residues lysine 155 and lysine 156 each participate in a glycyl lysine isopeptide (Lys-Gly) (interchain with G-Cter in SUMO2) cross-link. 160–167 (GRNGYGAK) lines the ATP pocket. Threonine 281 is modified (phosphothreonine). The tract at residues 341-343 (KKK) is interaction with DNA. Lysine 351 participates in a covalent cross-link: Glycyl lysine isopeptide (Lys-Gly) (interchain with G-Cter in SUMO2). 375–377 (QTK) provides a ligand contact to ATP. Glycyl lysine isopeptide (Lys-Gly) (interchain with G-Cter in SUMO2) cross-links involve residues lysine 385, lysine 396, lysine 415, lysine 417, lysine 424, and lysine 439. In terms of domain architecture, Toprim spans 454–571 (CTLILTEGDS…SLLRHRFLEE (118 aa)). Residue glutamate 460 participates in Mg(2+) binding. Residues lysine 465, lysine 479, and lysine 528 each participate in a glycyl lysine isopeptide (Lys-Gly) (interchain with G-Cter in SUMO2) cross-link. The Mg(2+) site is built by aspartate 540 and aspartate 542. Residues lysine 583, lysine 598, lysine 613, lysine 621, lysine 624, lysine 631, lysine 638, lysine 654, lysine 661, and lysine 675 each participate in a glycyl lysine isopeptide (Lys-Gly) (interchain with G-Cter in SUMO2) cross-link. In terms of domain architecture, Topo IIA-type catalytic spans 714-1168 (IPSMVDGLKP…SPSDLWKEDL (455 aa)). Residue tyrosine 804 is the O-(5'-phospho-DNA)-tyrosine intermediate of the active site. The tract at residues 989–998 (KLQSSLTCNS) is interaction with DNA. Lysine 1074 participates in a covalent cross-link: Glycyl lysine isopeptide (Lys-Gly) (interchain with G-Cter in SUMO2). 2 disordered regions span residues 1090–1118 (KEAQ…AAEA) and 1183–1211 (KQDE…VLPS). The segment covering 1098-1107 (DEEENEESDT) has biased composition (acidic residues). Position 1105 is a phosphoserine; by CK1 (serine 1105). Positions 1108 to 1118 (ETSTSDSAAEA) are enriched in low complexity. Residues lysine 1193 and lysine 1201 each participate in a glycyl lysine isopeptide (Lys-Gly) (interchain with G-Cter in SUMO2) cross-link. Serine 1211 bears the Phosphoserine mark. Lysine 1226 participates in a covalent cross-link: Glycyl lysine isopeptide (Lys-Gly) (interchain with G-Cter in SUMO2). A disordered region spans residues 1229-1528 (AEKKIRKKIK…EESDDDDDLF (300 aa)). A Glycyl lysine isopeptide (Lys-Gly) (interchain with G-Cter in SUMO1); alternate cross-link involves residue lysine 1238. Residue lysine 1238 forms a Glycyl lysine isopeptide (Lys-Gly) (interchain with G-Cter in SUMO2); alternate linkage. Threonine 1245 carries the phosphothreonine modification. Residues 1258 to 1270 (QRIEKKQKKEPGA) show a composition bias toward basic and acidic residues. Glycyl lysine isopeptide (Lys-Gly) (interchain with G-Cter in SUMO2) cross-links involve residues lysine 1272, lysine 1279, and lysine 1282. A phosphoserine mark is found at serine 1291, serine 1293, serine 1295, and serine 1298. Residues 1296 to 1306 (DVSSNESNVDV) show a composition bias toward low complexity. Threonine 1323 bears the Phosphothreonine mark. Over residues 1326–1345 (LDSDEDFSGLDEKDEDEDFL) the composition is skewed to acidic residues. Phosphoserine occurs at positions 1328 and 1333. Phosphothreonine is present on threonine 1350. Glycyl lysine isopeptide (Lys-Gly) (interchain with G-Cter in SUMO2) cross-links involve residues lysine 1359 and lysine 1363. Serine 1370 and serine 1373 each carry phosphoserine. A Glycyl lysine isopeptide (Lys-Gly) (interchain with G-Cter in SUMO2) cross-link involves residue lysine 1382. Phosphoserine is present on residues serine 1384 and serine 1388. Lysine 1418 is covalently cross-linked (Glycyl lysine isopeptide (Lys-Gly) (interchain with G-Cter in SUMO2); alternate). N6-acetyllysine; alternate is present on lysine 1418. Residues 1429–1435 (KKRAAPK) form an interaction with PLSCR1 region. Lysine 1438 participates in a covalent cross-link: Glycyl lysine isopeptide (Lys-Gly) (interchain with G-Cter in SUMO2); alternate. Lysine 1438 is modified (N6-acetyllysine; alternate). Glycyl lysine isopeptide (Lys-Gly) (interchain with G-Cter in SUMO2) cross-links involve residues lysine 1450 and lysine 1455. Serine 1465, serine 1467, serine 1470, and serine 1472 each carry phosphoserine. Glycyl lysine isopeptide (Lys-Gly) (interchain with G-Cter in SUMO2) cross-links involve residues lysine 1480 and lysine 1488. Basic and acidic residues predominate over residues 1506-1519 (AKSDRARKPIKYLE). Residue serine 1521 is modified to Phosphoserine.

The protein belongs to the type II topoisomerase family. As to quaternary structure, homodimer. Interacts with COPS5. Interacts with RECQL5; this stimulates DNA decatenation. Interacts with SETMAR; stimulates the topoisomerase activity. Interacts with DHX9; this interaction occurs in a E2 enzyme UBE2I- and RNA-dependent manner, negatively regulates DHX9-mediated double-stranded DNA and RNA duplex helicase activity and stimulates TOP2A-mediated supercoiled DNA relaxation activity. Interacts with HNRNPU (via C-terminus); this interaction protects the topoisomerase TOP2A from degradation and positively regulates the relaxation of supercoiled DNA in a RNA-dependent manner. Interacts with MCM3AP. Interacts with ERCC6. Interacts with PLSCR1. Interacts with GCNA; this interaction allows the resolution of topoisomerase II (TOP2A) DNA-protein cross-links. Interacts with POL1RA/RPA1 (via dock II) and UBTF in the context of Pol I complex; may assist Pol I transcription initiation by releasing supercoils occurring during DNA unwinding. Interacts with TPRN; TPRN interacts with a number of DNA damage response proteins, is recruited to sites of DNA damage and may play a role in DNA damage repair. Requires Mg(2+) as cofactor. The cofactor is Mn(2+). Ca(2+) is required as a cofactor. In terms of processing, phosphorylation has no effect on catalytic activity. However, phosphorylation at Ser-1105 by CSNK1D/CK1 promotes DNA cleavable complex formation.

The protein localises to the cytoplasm. It is found in the nucleus. The protein resides in the nucleoplasm. Its subcellular location is the nucleolus. It catalyses the reaction ATP-dependent breakage, passage and rejoining of double-stranded DNA.. Its function is as follows. Key decatenating enzyme that alters DNA topology by binding to two double-stranded DNA molecules, generating a double-stranded break in one of the strands, passing the intact strand through the broken strand, and religating the broken strand. May play a role in regulating the period length of BMAL1 transcriptional oscillation. This Mus musculus (Mouse) protein is DNA topoisomerase 2-alpha (Top2a).